The primary structure comprises 156 residues: Small ribosomal subunit protein uS7 (156 aa).

Belongs to the universal ribosomal protein uS7 family. Part of the 30S ribosomal subunit. Contacts proteins S9 and S11.

One of the primary rRNA binding proteins, it binds directly to 16S rRNA where it nucleates assembly of the head domain of the 30S subunit. Is located at the subunit interface close to the decoding center, probably blocks exit of the E-site tRNA. This Bifidobacterium longum (strain NCC 2705) protein is Small ribosomal subunit protein uS7.